Consider the following 1238-residue polypeptide: ATP-dependent helicase/nuclease subunit A (1238 aa).

The UvrD-like helicase ATP-binding domain maps to 6–474 (TKWTETQKSA…IKLSENFRSR (469 aa)). Position 27–34 (27–34 (AGAGTGKT)) interacts with ATP. In terms of domain architecture, UvrD-like helicase C-terminal spans 512-811 (PFEGNCGGDV…RIMSIHKSKG (300 aa)).

It belongs to the helicase family. AddA subfamily. In terms of assembly, heterodimer of AddA and AddB/RexB. Requires Mg(2+) as cofactor.

The catalysed reaction is Couples ATP hydrolysis with the unwinding of duplex DNA by translocating in the 3'-5' direction.. It catalyses the reaction ATP + H2O = ADP + phosphate + H(+). In terms of biological role, the heterodimer acts as both an ATP-dependent DNA helicase and an ATP-dependent, dual-direction single-stranded exonuclease. Recognizes the chi site generating a DNA molecule suitable for the initiation of homologous recombination. The AddA nuclease domain is required for chi fragment generation; this subunit has the helicase and 3' -&gt; 5' nuclease activities. This is ATP-dependent helicase/nuclease subunit A from Clostridium kluyveri (strain NBRC 12016).